Reading from the N-terminus, the 155-residue chain is Small ribosomal subunit protein uS7cz/uS7cy (155 aa).

Belongs to the universal ribosomal protein uS7 family. In terms of assembly, part of the 30S ribosomal subunit.

The protein resides in the plastid. It localises to the chloroplast. One of the primary rRNA binding proteins, it binds directly to 16S rRNA where it nucleates assembly of the head domain of the 30S subunit. In Nymphaea alba (White water-lily), this protein is Small ribosomal subunit protein uS7cz/uS7cy (rps7-A).